The primary structure comprises 189 residues: Receptor activity-modifying protein 2 (189 aa).

A signal peptide spans 1–44; that stretch reads MAPLRVERAPGGSRLGVTRAQRPTALCLPPLLLLLLLLLGAVSA. Residues 45 to 157 are Extracellular-facing; the sequence is SPESLNQSLP…VQPTFSDPPE (113 aa). The span at 49-61 shows a compositional bias: polar residues; the sequence is LNQSLPESQNQSH. The interval 49 to 69 is disordered; that stretch reads LNQSLPESQNQSHPTEDSLVS. 4 N-linked (GlcNAc...) asparagine glycosylation sites follow: Asn50, Asn58, Asn99, and Asn144. 2 disulfide bridges follow: Cys83-Cys113 and Cys98-Cys145. A helical transmembrane segment spans residues 158 to 179; sequence DVLLAMIIAPICLIPFLVTLVV. The Cytoplasmic segment spans residues 180–189; that stretch reads WRSKDSDAQA.

The protein belongs to the RAMP family. In terms of assembly, heterodimer of CALCRL and RAMP2; the interaction forms the receptor complex for adrenomedullin/ADM. Heterodimer of CALCR and RAMP2; interaction forms the AMYR2 receptor complex for calcitonin/CALC and amylin/IAPP. As to expression, ubiquitous. Expressed predominantly in embryonic brain, lung and gut and in adult heart, lung, skeletal muscle and brain.

It localises to the cell membrane. Its function is as follows. Accessory protein that interacts with and modulates the function of G-protein coupled receptors including calcitonin gene-related peptide type 1 receptor (CALCRL) and calcitonin receptor (CALCR). Required for the transport of CALCRL to the plasma membrane. Together with CALCRL, form a receptor complex for adrenomedullin/ADM. Together with CALCR, act as a receptor complex for calcitonin/CT/CALC. Together with CALCR, also act as a receptor complex for amylin/IAPP. The chain is Receptor activity-modifying protein 2 from Mus musculus (Mouse).